The sequence spans 230 residues: 3-isopropylmalate dehydratase small subunit (230 aa).

The protein belongs to the LeuD family. LeuD type 1 subfamily. Heterodimer of LeuC and LeuD.

It carries out the reaction (2R,3S)-3-isopropylmalate = (2S)-2-isopropylmalate. It participates in amino-acid biosynthesis; L-leucine biosynthesis; L-leucine from 3-methyl-2-oxobutanoate: step 2/4. In terms of biological role, catalyzes the isomerization between 2-isopropylmalate and 3-isopropylmalate, via the formation of 2-isopropylmaleate. This chain is 3-isopropylmalate dehydratase small subunit, found in Bifidobacterium longum (strain DJO10A).